The sequence spans 378 residues: Putative dioxygenase VC_1345 (378 aa).

The Fe cation site is built by His-288, Asp-294, and His-324.

This sequence belongs to the homogentisate dioxygenase family. The cofactor is Fe cation.

The protein is Putative dioxygenase VC_1345 of Vibrio cholerae serotype O1 (strain ATCC 39315 / El Tor Inaba N16961).